The primary structure comprises 265 residues: uncharacterized protein (265 aa).

A disordered region spans residues 122 to 145 (THYRDNGQTPPRDTRPHGGISLGG).

This is an uncharacterized protein from Zymomonas mobilis subsp. mobilis (strain ATCC 31821 / ZM4 / CP4).